A 213-amino-acid chain; its full sequence is Putative manganese efflux pump MntP (213 aa).

Transmembrane regions (helical) follow at residues 6-26, 34-54, 58-78, 107-127, 132-152, 153-173, and 192-212; these read LGVL…GIGM, AFML…FGIL, ALGL…LFFL, GSGG…LFAP, LVVI…SLGT, VGAQ…IMTV, and LAGG…SASP.

This sequence belongs to the MntP (TC 9.B.29) family.

It is found in the cell membrane. Functionally, probably functions as a manganese efflux pump. The protein is Putative manganese efflux pump MntP of Heliobacterium modesticaldum (strain ATCC 51547 / Ice1).